A 414-amino-acid chain; its full sequence is Gamma-glutamyl phosphate reductase (414 aa).

The protein belongs to the gamma-glutamyl phosphate reductase family.

Its subcellular location is the cytoplasm. The enzyme catalyses L-glutamate 5-semialdehyde + phosphate + NADP(+) = L-glutamyl 5-phosphate + NADPH + H(+). It functions in the pathway amino-acid biosynthesis; L-proline biosynthesis; L-glutamate 5-semialdehyde from L-glutamate: step 2/2. Functionally, catalyzes the NADPH-dependent reduction of L-glutamate 5-phosphate into L-glutamate 5-semialdehyde and phosphate. The product spontaneously undergoes cyclization to form 1-pyrroline-5-carboxylate. This chain is Gamma-glutamyl phosphate reductase, found in Clostridium botulinum (strain Alaska E43 / Type E3).